A 138-amino-acid chain; its full sequence is Proofreading thioesterase EntH (138 aa).

Residue Glu-64 is the Nucleophile or proton acceptor of the active site.

This sequence belongs to the thioesterase PaaI family. As to quaternary structure, homotetramer. Dimer of dimers. Interacts specifically with the aryl carrier protein (ArCP) domain of EntB.

The protein resides in the cytoplasm. It functions in the pathway siderophore biosynthesis; enterobactin biosynthesis. Its function is as follows. Required for optimal enterobactin synthesis. Acts as a proofreading enzyme that prevents EntB misacylation by hydrolyzing the thioester bound existing between EntB and wrongly charged molecules. The sequence is that of Proofreading thioesterase EntH from Citrobacter rodentium (strain ICC168) (Citrobacter freundii biotype 4280).